A 247-amino-acid polypeptide reads, in one-letter code: tRNA uridine(34) hydroxylase (247 aa).

In terms of domain architecture, Rhodanese spans 124–218; sequence TKQDVIVIDT…YLEDTQNKNN (95 aa). The active-site Cysteine persulfide intermediate is the C178.

It belongs to the TrhO family.

It catalyses the reaction uridine(34) in tRNA + AH2 + O2 = 5-hydroxyuridine(34) in tRNA + A + H2O. Catalyzes oxygen-dependent 5-hydroxyuridine (ho5U) modification at position 34 in tRNAs. This is tRNA uridine(34) hydroxylase from Rickettsia massiliae (strain Mtu5).